The primary structure comprises 316 residues: Annexin D7 (316 aa).

An N-acetylalanine modification is found at A2. Annexin repeat units follow at residues 11–82 (PLPE…LWTF), 83–154 (EPAE…PLVS), 166–237 (TLAR…AVIK), and 241–312 (YPEK…ALLG). 4 residues coordinate Ca(2+): F24, G26, G28, and E68. S95 is modified (phosphoserine). Phosphothreonine is present on residues T100 and T112. Y129 is subject to Phosphotyrosine. Ca(2+) is bound by residues I254 and G258. The residue at position 283 (Y283) is a Phosphotyrosine. S288 is modified (phosphoserine). Residues D298, T299, and E304 each contribute to the Ca(2+) site.

Belongs to the annexin (TC 1.A.31.1) family. In terms of tissue distribution, expressed in flowers.

The chain is Annexin D7 (ANNAT7) from Arabidopsis thaliana (Mouse-ear cress).